The primary structure comprises 209 residues: Ribosomal RNA large subunit methyltransferase E (209 aa).

Positions 63, 65, 83, 99, and 124 each coordinate S-adenosyl-L-methionine. The Proton acceptor role is filled by Lys-164.

The protein belongs to the class I-like SAM-binding methyltransferase superfamily. RNA methyltransferase RlmE family.

The protein localises to the cytoplasm. It carries out the reaction uridine(2552) in 23S rRNA + S-adenosyl-L-methionine = 2'-O-methyluridine(2552) in 23S rRNA + S-adenosyl-L-homocysteine + H(+). In terms of biological role, specifically methylates the uridine in position 2552 of 23S rRNA at the 2'-O position of the ribose in the fully assembled 50S ribosomal subunit. The protein is Ribosomal RNA large subunit methyltransferase E of Baumannia cicadellinicola subsp. Homalodisca coagulata.